The following is a 180-amino-acid chain: Major urinary protein 2 (180 aa).

Positions 1-18 (MKMLLLLCLGLTLVCVHA) are cleaved as a signal peptide. The cysteines at positions 82 and 175 are disulfide-linked.

It belongs to the calycin superfamily. Lipocalin family. Abundant in the urine of adult male mice but absent from that of females.

It localises to the secreted. In terms of biological role, binds pheromones that are released from drying urine of males. These pheromones affect the sexual behavior of females. In Mus musculus (Mouse), this protein is Major urinary protein 2 (Mup2).